A 451-amino-acid chain; its full sequence is Putative gluconeogenesis factor (451 aa).

It belongs to the gluconeogenesis factor family.

The protein localises to the cytoplasm. Required for morphogenesis under gluconeogenic growth conditions. This chain is Putative gluconeogenesis factor, found in Clostridium acetobutylicum (strain ATCC 824 / DSM 792 / JCM 1419 / IAM 19013 / LMG 5710 / NBRC 13948 / NRRL B-527 / VKM B-1787 / 2291 / W).